The chain runs to 276 residues: uncharacterized protein (276 aa).

7 helical membrane passes run Thr-5–Ala-25, Pro-32–Gly-52, Gly-64–Val-84, Ala-104–Leu-124, Ile-149–Pro-169, Leu-193–Val-213, and Val-244–Phe-264.

The protein belongs to the monovalent cation:proton antiporter 2 (CPA2) transporter (TC 2.A.37) family.

The protein localises to the cell membrane. This is an uncharacterized protein from Methylorubrum extorquens (Methylobacterium dichloromethanicum).